The sequence spans 108 residues: Thioredoxin (108 aa).

Residues 2–108 form the Thioredoxin domain; it reads SDAILYVSDD…QLTAFLDSQL (107 aa). Residues Cys-33 and Cys-36 are joined by a disulfide bond.

Belongs to the thioredoxin family.

Functionally, component of the thioredoxin-thioredoxin reductase system. Participates in various redox reactions through the reversible oxidation of its active center dithiol to a disulfide and catalyzes dithiol-disulfide exchange reactions. The protein is Thioredoxin (trxA) of Acidithiobacillus ferridurans.